We begin with the raw amino-acid sequence, 290 residues long: MHFQDIIGTLNSFWANQGCLLLQPYDTEKGAGTMSPHTVLRAIGPEPWAVAYPEPCRRPTDGRYGDNPNRAQHYFQYQVLIKPSPDAIQETYLASLEALGIKAADHDIRFVEDNWESPTLGAWGVGWEVWLDGMEVTQFTYFQQCGGLDCKPVSIEITYGLERLAMYLQDVESIWDLSWNADRKYGDIWLPFEKGQCKFNFEASNPDRLKQLFAIYEAEASDLIHQQLPAPALDFVLKCSHTFNLLEARGVISVTERTATIGRIRNLARKVAEAWLVEREALGFPLLPSN.

This sequence belongs to the class-II aminoacyl-tRNA synthetase family. Tetramer of two alpha and two beta subunits.

The protein localises to the cytoplasm. The catalysed reaction is tRNA(Gly) + glycine + ATP = glycyl-tRNA(Gly) + AMP + diphosphate. This is Glycine--tRNA ligase alpha subunit from Synechococcus sp. (strain CC9902).